An 80-amino-acid polypeptide reads, in one-letter code: Mu-conotoxin BuIIIC (80 aa).

A signal peptide spans 1–22 (MMSKLGVLLTICLLLFPLFALP). Residues 23 to 51 (QDGDQPADRPAERMQDDLSSEQHPLFEKR) constitute a propeptide that is removed on maturation. 3 disulfides stabilise this stretch: Cys-56/Cys-70, Cys-57/Cys-76, and Cys-66/Cys-77. Cysteine amide is present on Cys-77.

The protein belongs to the conotoxin M superfamily. As to expression, expressed by the venom duct.

Its subcellular location is the secreted. Mu-conotoxins block voltage-gated sodium channels. Extremely potent inhibitor of Nav1.4/SCN4A (96% inhibition at 1 uM). The inhibition is very slowly reversible. The sequence is that of Mu-conotoxin BuIIIC from Conus bullatus (Bubble cone).